A 224-amino-acid polypeptide reads, in one-letter code: Adenylate kinase (224 aa).

Position 10-15 (10-15 (GSGKST)) interacts with ATP. The segment at 30-59 (SSGDMIRAEIEKGSELGKELKKYLAKGELI) is NMP. AMP-binding positions include Ser31, Arg36, 57–59 (ELI), 83–86 (GYPR), and Gln90. Residues 124 to 161 (GRRICPKCGAVYHLRYRPPKVPGKCDLCGSQLIQREDD) are LID. Arg125 lines the ATP pocket. The Zn(2+) site is built by Cys128 and Cys131. Residue 134 to 135 (VY) coordinates ATP. Zn(2+) contacts are provided by Cys148 and Cys151. The AMP site is built by Arg158 and Arg169. Gly197 is a binding site for ATP.

The protein belongs to the adenylate kinase family. As to quaternary structure, monomer.

It is found in the cytoplasm. The catalysed reaction is AMP + ATP = 2 ADP. Its pathway is purine metabolism; AMP biosynthesis via salvage pathway; AMP from ADP: step 1/1. In terms of biological role, catalyzes the reversible transfer of the terminal phosphate group between ATP and AMP. Plays an important role in cellular energy homeostasis and in adenine nucleotide metabolism. The protein is Adenylate kinase of Thermococcus onnurineus (strain NA1).